The sequence spans 533 residues: Undecaprenyl phosphate-alpha-4-amino-4-deoxy-L-arabinose arabinosyl transferase (533 aa).

The next 13 membrane-spanning stretches (helical) occupy residues 10 to 30, 64 to 84, 86 to 106, 113 to 133, 137 to 157, 170 to 190, 207 to 227, 257 to 277, 290 to 310, 312 to 332, 345 to 365, 377 to 397, and 402 to 422; these read LLLAAFLLAYLLPLGFHGLWI, PAGYWLIALGQAVFGENLFGV, IASAISTGLSVLLAYLLAGKI, SFASALLFMSFGFVAGQAGYS, PQFTLWTNLTLVAFWYAVHSI, VACGMGFMTKGFLAWALPAII, FGPLAVVIAIAVCLPWALAVH, WWFYLPLLIAACLPWALLLPV, DTAFLLLWLVLPLAFLSLSKG, LPTYILPCLLPLALLMADALV, VNGIVNAALTFLGLLALIYVQ, HLLLAVIVLTGWTLTNALQGI, and FWALPAVGSWLLIVLLPAALP.

This sequence belongs to the glycosyltransferase 83 family.

The protein localises to the cell inner membrane. It catalyses the reaction 4-amino-4-deoxy-alpha-L-arabinopyranosyl di-trans,octa-cis-undecaprenyl phosphate + lipid IVA = lipid IIA + di-trans,octa-cis-undecaprenyl phosphate.. It functions in the pathway lipopolysaccharide metabolism; 4-amino-4-deoxy-beta-L-arabinose-lipid A biosynthesis. In terms of biological role, catalyzes the transfer of the L-Ara4N moiety of the glycolipid undecaprenyl phosphate-alpha-L-Ara4N to lipid A. The modified arabinose is attached to lipid A and is required for resistance to polymyxin and cationic antimicrobial peptides. The chain is Undecaprenyl phosphate-alpha-4-amino-4-deoxy-L-arabinose arabinosyl transferase from Pseudomonas savastanoi pv. phaseolicola (strain 1448A / Race 6) (Pseudomonas syringae pv. phaseolicola (strain 1448A / Race 6)).